Here is a 153-residue protein sequence, read N- to C-terminus: Large ribosomal subunit protein eL15 (153 aa).

Residue Lys-32 forms a Glycyl lysine isopeptide (Lys-Gly) (interchain with G-Cter in SUMO2) linkage. Residues Ser-46 and Ser-49 each carry the phosphoserine modification. Residues 114 to 135 form a disordered region; the sequence is TSAGRKSRGLGKGHKFHHTIGG. The segment covering 118 to 131 has biased composition (basic residues); that stretch reads RKSRGLGKGHKFHH.

The protein belongs to the eukaryotic ribosomal protein eL15 family. Component of the large ribosomal subunit. Interacts with IFIT1 (via TPR repeats 1-4).

The protein resides in the cytoplasm. In terms of biological role, component of the large ribosomal subunit. The ribosome is a large ribonucleoprotein complex responsible for the synthesis of proteins in the cell. In Sus scrofa (Pig), this protein is Large ribosomal subunit protein eL15 (RPL15).